A 229-amino-acid polypeptide reads, in one-letter code: Heptaprenylglyceryl phosphate synthase (229 aa).

K12 lines the sn-glycerol 1-phosphate pocket. Residues D14 and S40 each contribute to the Mg(2+) site. Sn-glycerol 1-phosphate contacts are provided by residues 159–164, G189, and 209–210; these read YLEYSG and GN.

It belongs to the GGGP/HepGP synthase family. Group I subfamily. As to quaternary structure, homodimer. Mg(2+) serves as cofactor.

It catalyses the reaction sn-glycerol 1-phosphate + all-trans-heptaprenyl diphosphate = 3-heptaprenyl-sn-glycero-1-phosphate + diphosphate. It functions in the pathway membrane lipid metabolism; glycerophospholipid metabolism. Its function is as follows. Prenyltransferase that catalyzes in vivo the transfer of the heptaprenyl moiety of heptaprenyl pyrophosphate (HepPP; 35 carbon atoms) to the C3 hydroxyl of sn-glycerol-1-phosphate (G1P), producing heptaprenylglyceryl phosphate (HepGP). This reaction is an ether-bond-formation step in the biosynthesis of archaea-type G1P-based membrane lipids found in Bacillales. This is Heptaprenylglyceryl phosphate synthase from Bacillus cereus (strain B4264).